Consider the following 274-residue polypeptide: Protein CIMAP1C (274 aa).

Residues 1–27 form a disordered region; the sequence is MKLPKGTRSSVYFAQHPEKEPLPSRQE. Over residues 16 to 27 the composition is skewed to basic and acidic residues; sequence HPEKEPLPSRQE. STPGR repeat units follow at residues 199–224 and 235–260; these read PGPTTYARPEPSIYQNRSPTYSMAKR and PGPGSHEVQQVTVHKPHIPAFTMGIK.

This sequence belongs to the CIMAP family.

The sequence is that of Protein CIMAP1C from Homo sapiens (Human).